The primary structure comprises 335 residues: F420-dependent glucose-6-phosphate dehydrogenase (335 aa).

Position 40 (aspartate 40) interacts with coenzyme F420-(gamma-Glu)n. The active-site Proton donor is the histidine 41. Coenzyme F420-(gamma-Glu)n contacts are provided by residues threonine 77 and 108 to 109 (TG). Glutamate 110 serves as the catalytic Proton acceptor. Residues asparagine 113, 177–178 (GG), and 180–181 (VV) each bind coenzyme F420-(gamma-Glu)n. Substrate contacts are provided by threonine 195, lysine 198, lysine 259, and arginine 283.

The protein belongs to the F420-dependent glucose-6-phosphate dehydrogenase family. As to quaternary structure, homodimer.

It carries out the reaction oxidized coenzyme F420-(gamma-L-Glu)(n) + D-glucose 6-phosphate + H(+) = 6-phospho-D-glucono-1,5-lactone + reduced coenzyme F420-(gamma-L-Glu)(n). Functionally, catalyzes the coenzyme F420-dependent oxidation of glucose 6-phosphate (G6P) to 6-phosphogluconolactone. The protein is F420-dependent glucose-6-phosphate dehydrogenase of Segniliparus rotundus (strain ATCC BAA-972 / CDC 1076 / CIP 108378 / DSM 44985 / JCM 13578).